We begin with the raw amino-acid sequence, 149 residues long: Large ribosomal subunit protein bL9 (149 aa).

The protein belongs to the bacterial ribosomal protein bL9 family.

Binds to the 23S rRNA. The sequence is that of Large ribosomal subunit protein bL9 from Helicobacter acinonychis (strain Sheeba).